The primary structure comprises 329 residues: uncharacterized protein (329 aa).

Coiled-coil stretches lie at residues 57-120 and 225-251; these read KKEE…QEVT and QRQRQEEVQEVLQEAEKTHQATLGNMM.

This is an uncharacterized protein from Homo sapiens (Human).